The chain runs to 664 residues: Methionine--tRNA ligase (664 aa).

Residues 15 to 25 (YYPSGKAHIGH) carry the 'HIGH' region motif. A 'KMSKS' region motif is present at residues 310–314 (KMSKS). Residue K313 coordinates ATP. In terms of domain architecture, tRNA-binding spans 563–664 (DFDKIDLRVA…SALPNGAKVK (102 aa)).

The protein belongs to the class-I aminoacyl-tRNA synthetase family. MetG type 2B subfamily. In terms of assembly, homodimer.

The protein localises to the cytoplasm. The catalysed reaction is tRNA(Met) + L-methionine + ATP = L-methionyl-tRNA(Met) + AMP + diphosphate. Its function is as follows. Is required not only for elongation of protein synthesis but also for the initiation of all mRNA translation through initiator tRNA(fMet) aminoacylation. This Listeria monocytogenes serovar 1/2a (strain ATCC BAA-679 / EGD-e) protein is Methionine--tRNA ligase (metG).